A 1055-amino-acid chain; its full sequence is MSLEQYVSDKAISLLGMSEPSVVEYLIAEAKGSSSSNNLYQKLVSFGMDGDDPAVKEFAHTLYARIPREGSRPKENYNARKKKEQGILQMERLNSSYDLLIEPQSHETPGKPLKKKSRSKTPKREIARRQRDEDEWESDEYEEVVDGSASHPIEEDSVSTDFQNHDYEKSSDPETERLNDLREREEFEERLRRKDLEAATNEFVEDYSSKFSSEELALRKLADDPESWRKLASELRKKSRQQYLKPRAQQQLEILRREIRDEEQLFAGEKLTQAEIRELEKKKELLRIAEERQRLEKQATEYQMPEDYFTEQGKLDRKRKEEVLYQRYKDSNEGEQNEVTMGAAEQQRWEAQQINKALLFDQNEWLPPGEKQFDFVFDESQQIDFLLDTKLSAENPVDTDKMTDVKVEKSLESSRKSLPVYQYKDDLLKAINEYQVLLIVAETGSGKTTQLPQFLHEAGYTKGNKKICCTQPRRVAAMSVAARVAKEMDVRLGQEVGYSIRFENATSEKTVIKYLTDGMLLREFLTEPDLASYSVIIIDEAHERTLHTDILFGLVKDIARFRPDLKVLISSATIDAEKFSAYFDEAPVFYVPGRRYPVDIYYTPQPEANYIQAAITTILQIHTTQPAGDILVFLTGQDEIELMSENMQELCRILGKRIPEIILCPIYANLPSELQAKIFDPTPPGARKVVLATNIAETSITIDGVNFVIDSGFVKQNMYNPRTGMESLVSVPCSRASADQRAGRAGRVGPGKCFRLYTRRTYNNELDMVTSPEIQRTNLTNIVLLLKSLGINNLLDFDFMDAPPPETLMRSLELLYALGALNNRGELTKLGRQMAEFPTDPMLSKSLIASSKYGCVEEVLSIVSMLGEASSLFYRPKDKIMEADKARANFTQPGGDHLTLLHIWNEWVDTDFSYNWARENFLQYKSLCRARDVRDQLANLCERVEIELVTNSSESLDPIKKAITAGYFSNAARLDRSGDSYRTVKSNQTVYIHPSSSVAEKKPKVIIYFELVLTTKEYCRQITEIQPEWLLEISPHYFKPENIEELQKTQKRHKR.

Basic and acidic residues predominate over residues 67 to 78 (PREGSRPKENYN). The interval 67-184 (PREGSRPKEN…TERLNDLRER (118 aa)) is disordered. A compositionally biased stretch (basic residues) spans 112–121 (PLKKKSRSKT). The span at 122–132 (PKREIARRQRD) shows a compositional bias: basic and acidic residues. Over residues 133–145 (EDEWESDEYEEVV) the composition is skewed to acidic residues. Positions 163–184 (QNHDYEKSSDPETERLNDLRER) are enriched in basic and acidic residues. Positions 428 to 592 (LKAINEYQVL…FDEAPVFYVP (165 aa)) constitute a Helicase ATP-binding domain. 441–448 (AETGSGKT) contacts ATP. Positions 539-542 (DEAH) match the DEAH box motif. Residues 617–790 (TILQIHTTQP…NIVLLLKSLG (174 aa)) form the Helicase C-terminal domain.

Belongs to the DEAD box helicase family. DEAH subfamily. DDX16/PRP8 sub-subfamily.

It is found in the nucleus. It carries out the reaction ATP + H2O = ADP + phosphate + H(+). Functionally, involved in pre-mRNA splicing. Is required together with ATP and at least one other factor, for the first cleavage-ligation reaction. Functions as a molecular motor in the activation of the precatalytic spliceosome for the first transesterification reaction of pre-mRNA splicing by hydrolyzing ATP to cause the activation of the spliceosome without the occurrence of splicing. This Schizosaccharomyces pombe (strain 972 / ATCC 24843) (Fission yeast) protein is Pre-mRNA-splicing factor ATP-dependent RNA helicase-like protein cdc28 (cdc28).